Reading from the N-terminus, the 97-residue chain is MSVSIKPLEDRIVVRPLEAEQTTASGLVIPDSAQEKPQEGEVVAVGPGRFEDGNRVPVDVAVGDVVIYSKYGGTEVKTGGTEYLVLSARDVLAIVVK.

Belongs to the GroES chaperonin family. Heptamer of 7 subunits arranged in a ring. Interacts with the chaperonin GroEL.

The protein localises to the cytoplasm. Functionally, together with the chaperonin GroEL, plays an essential role in assisting protein folding. The GroEL-GroES system forms a nano-cage that allows encapsulation of the non-native substrate proteins and provides a physical environment optimized to promote and accelerate protein folding. GroES binds to the apical surface of the GroEL ring, thereby capping the opening of the GroEL channel. The chain is Co-chaperonin GroES from Arthrobacter sp. (strain FB24).